A 1099-amino-acid chain; its full sequence is Probable inorganic carbon transporter subunit DabA (1099 aa).

Residues 175–194 (RQGRRRFATTERRTRRTRRS) are disordered. A compositionally biased stretch (basic residues) spans 176–194 (QGRRRFATTERRTRRTRRS). Residues Cys514, Asp516, His722, and Cys737 each contribute to the Zn(2+) site. The disordered stretch occupies residues 1071–1099 (AGAGAAQPTRDAIELPEQASGPLPARDGQ).

Belongs to the inorganic carbon transporter (TC 9.A.2) DabA family. In terms of assembly, forms a complex with DabB. The cofactor is Zn(2+).

Its subcellular location is the cell membrane. Functionally, part of an energy-coupled inorganic carbon pump. This Parafrankia sp. (strain EAN1pec) protein is Probable inorganic carbon transporter subunit DabA.